The sequence spans 347 residues: Phosphoribosylformylglycinamidine cyclo-ligase (347 aa).

This sequence belongs to the AIR synthase family.

It is found in the cytoplasm. It carries out the reaction 2-formamido-N(1)-(5-O-phospho-beta-D-ribosyl)acetamidine + ATP = 5-amino-1-(5-phospho-beta-D-ribosyl)imidazole + ADP + phosphate + H(+). It functions in the pathway purine metabolism; IMP biosynthesis via de novo pathway; 5-amino-1-(5-phospho-D-ribosyl)imidazole from N(2)-formyl-N(1)-(5-phospho-D-ribosyl)glycinamide: step 2/2. The protein is Phosphoribosylformylglycinamidine cyclo-ligase of Yersinia pseudotuberculosis serotype IB (strain PB1/+).